The following is a 168-amino-acid chain: Ribosome maturation factor RimP (168 aa).

It belongs to the RimP family.

Its subcellular location is the cytoplasm. Functionally, required for maturation of 30S ribosomal subunits. This Bordetella parapertussis (strain 12822 / ATCC BAA-587 / NCTC 13253) protein is Ribosome maturation factor RimP.